The following is a 91-amino-acid chain: Probable Fe(2+)-trafficking protein (91 aa).

This sequence belongs to the Fe(2+)-trafficking protein family.

Could be a mediator in iron transactions between iron acquisition and iron-requiring processes, such as synthesis and/or repair of Fe-S clusters in biosynthetic enzymes. The chain is Probable Fe(2+)-trafficking protein from Cupriavidus metallidurans (strain ATCC 43123 / DSM 2839 / NBRC 102507 / CH34) (Ralstonia metallidurans).